Reading from the N-terminus, the 354-residue chain is Serum paraoxonase/arylesterase 2 (354 aa).

Cysteines 42 and 352 form a disulfide. The Ca(2+) site is built by Asp-53 and Asp-54. The active-site Proton acceptor is His-114. Ca(2+) contacts are provided by Ile-116, Asn-167, Asp-168, and Asn-223. Residue Asn-254 is glycosylated (N-linked (GlcNAc...) asparagine). The Ca(2+) site is built by Asp-268 and Asn-269. Residues Asn-269 and Asn-323 are each glycosylated (N-linked (GlcNAc...) asparagine).

It belongs to the paraoxonase family. As to quaternary structure, homotrimer. Requires Ca(2+) as cofactor. Post-translationally, glycosylated. In terms of processing, the signal sequence is not cleaved.

It is found in the membrane. The enzyme catalyses a phenyl acetate + H2O = a phenol + acetate + H(+). It carries out the reaction an N-acyl-L-homoserine lactone + H2O = an N-acyl-L-homoserine + H(+). Its function is as follows. Capable of hydrolyzing lactones and a number of aromatic carboxylic acid esters. This is Serum paraoxonase/arylesterase 2 (PON2) from Canis lupus familiaris (Dog).